We begin with the raw amino-acid sequence, 188 residues long: Probable nicotinate-nucleotide adenylyltransferase (188 aa).

The protein belongs to the NadD family.

The enzyme catalyses nicotinate beta-D-ribonucleotide + ATP + H(+) = deamido-NAD(+) + diphosphate. It functions in the pathway cofactor biosynthesis; NAD(+) biosynthesis; deamido-NAD(+) from nicotinate D-ribonucleotide: step 1/1. Functionally, catalyzes the reversible adenylation of nicotinate mononucleotide (NaMN) to nicotinic acid adenine dinucleotide (NaAD). The sequence is that of Probable nicotinate-nucleotide adenylyltransferase from Listeria innocua serovar 6a (strain ATCC BAA-680 / CLIP 11262).